A 287-amino-acid polypeptide reads, in one-letter code: NAD kinase (287 aa).

D70 acts as the Proton acceptor in catalysis. Residues 70-71 (DG), 144-145 (ND), R155, K172, D174, 185-190 (TAYSLS), and Q244 contribute to the NAD(+) site.

It belongs to the NAD kinase family. The cofactor is a divalent metal cation.

It is found in the cytoplasm. It carries out the reaction NAD(+) + ATP = ADP + NADP(+) + H(+). Its function is as follows. Involved in the regulation of the intracellular balance of NAD and NADP, and is a key enzyme in the biosynthesis of NADP. Catalyzes specifically the phosphorylation on 2'-hydroxyl of the adenosine moiety of NAD to yield NADP. This is NAD kinase from Solibacter usitatus (strain Ellin6076).